A 155-amino-acid polypeptide reads, in one-letter code: UPF0260 protein NGR_c07710 (155 aa).

It belongs to the UPF0260 family.

This is UPF0260 protein NGR_c07710 from Sinorhizobium fredii (strain NBRC 101917 / NGR234).